Consider the following 436-residue polypeptide: 3-ketoacyl-CoA thiolase (436 aa).

Residue cysteine 99 is the Acyl-thioester intermediate of the active site. Residues histidine 392 and cysteine 422 each act as proton acceptor in the active site.

Belongs to the thiolase-like superfamily. Thiolase family. As to quaternary structure, heterotetramer of two alpha chains (FadJ) and two beta chains (FadI).

Its subcellular location is the cytoplasm. It catalyses the reaction an acyl-CoA + acetyl-CoA = a 3-oxoacyl-CoA + CoA. It functions in the pathway lipid metabolism; fatty acid beta-oxidation. Catalyzes the final step of fatty acid oxidation in which acetyl-CoA is released and the CoA ester of a fatty acid two carbons shorter is formed. The chain is 3-ketoacyl-CoA thiolase from Escherichia coli O8 (strain IAI1).